The chain runs to 108 residues: MSEAKDNGSRDEVLVPHKNCRKNTTVPGKKGEEKSLAPVFAEKLISPSRRGAKLKDRESHQENEDRNSELDQDEEDKESFCRGFPMSGCELETSCCVCHSTALGERFC.

Composition is skewed to basic and acidic residues over residues 1–15 and 53–69; these read MSEA…EVLV and KLKD…RNSE. The tract at residues 1–77 is disordered; sequence MSEAKDNGSR…SELDQDEEDK (77 aa).

This is an uncharacterized protein from Homo sapiens (Human).